The primary structure comprises 578 residues: MAKSELKRKKHQSGNEEVKEKRQKPLKNDKKIAEELPQDEDDYEQEEENEDADQNTSVESESEELDNENEDERVQKSVNLNASSTSDIEKFSDLQLSENIQKAIKEMGFETMTEIQKRSIPPLLAGRDVLGAAKTGSGKTLAFLIPTIEMLYALKFKPRNGTGVIIISPTRELALQIFGVAKELLKYHHQTFGIVIGGANRRAEADKLVKGVNLLVATPGRLLDHLQNTKGFVFRNLRSLVIDEADRILEIGFEDEMRQIMKILPSENRQTLLFSATQTTKVEDLARISLKPGPLYVNVDSGKPTSTVEGLEQGYVVVDSDKRFLLLFSFLKRNLKKKVIVFMSSCASVKYMAELLNYIDLPVLDLHGKQKQQRRTNTFFEFCNAEKGILLCTNVAARGLDIPAVDWIVQYDPPDDPRDYIHRVGRTARGTKGTGKSLMFLAPSELGFLRYLKTAKVSLNEFEFPANKVANVQSQLEKLVSKNYYLQQSAKDGYRSYLQAYASYSLKSIFDINKLDLAKVAKSFGFAHPPNVNITIGASGRTDKKERRAGYNKKNHVDVYSKQRSSAISQDKERGWSR.

The segment covering 1–12 has biased composition (basic residues); the sequence is MAKSELKRKKHQ. The disordered stretch occupies residues 1–81; sequence MAKSELKRKK…ERVQKSVNLN (81 aa). Acidic residues-rich tracts occupy residues 36-53 and 60-71; these read LPQD…EDAD and SESEELDNENED. 2 positions are modified to phosphoserine: Ser60 and Ser62. A Q motif motif is present at residues 89–117; it reads EKFSDLQLSENIQKAIKEMGFETMTEIQK. Residues 120–296 enclose the Helicase ATP-binding domain; it reads IPPLLAGRDV…RISLKPGPLY (177 aa). Position 133 to 140 (133 to 140) interacts with ATP; it reads AKTGSGKT. The DEAD box signature appears at 243-246; that stretch reads DEAD. The Helicase C-terminal domain maps to 310–480; sequence GLEQGYVVVD…NVQSQLEKLV (171 aa). Residues 322 to 338 carry the Bipartite nuclear localization signal motif; the sequence is KRFLLLFSFLKRNLKKK. Residues 543 to 561 are compositionally biased toward basic and acidic residues; the sequence is DKKERRAGYNKKNHVDVYS. The segment at 543-578 is disordered; the sequence is DKKERRAGYNKKNHVDVYSKQRSSAISQDKERGWSR.

This sequence belongs to the DEAD box helicase family. DDX18/HAS1 subfamily. As to quaternary structure, associates in the nucleolus with the 60S and pre-60S ribosomal subunits.

The protein localises to the nucleus. It localises to the nucleolus. It catalyses the reaction ATP + H2O = ADP + phosphate + H(+). Functionally, ATP-dependent RNA helicase involved in 40S ribosomal subunit biogenesis. Required for the processing and cleavage of 35S pre-rRNA at sites A0, A1, and A2, leading to mature 18S rRNA. The protein is ATP-dependent RNA helicase has1 (has1) of Schizosaccharomyces pombe (strain 972 / ATCC 24843) (Fission yeast).